The chain runs to 449 residues: Pentalenene oxygenase (449 aa).

Residues 251–273 (VITVMAAGTETVAGTLTWIFHLL) form a helical membrane-spanning segment. Residue Cys393 coordinates heme.

The protein belongs to the cytochrome P450 family.

It is found in the membrane. The enzyme catalyses pentalenene + 4 reduced [2Fe-2S]-[ferredoxin] + 2 O2 + 4 H(+) = pentalen-13-al + 4 oxidized [2Fe-2S]-[ferredoxin] + 3 H2O. The protein operates within antibiotic biosynthesis; neopentalenolactone biosynthesis. Catalyzes the conversion of pentalenene to pentalen-13-al by stepwise oxidation via pentalen-13-ol, a precursor of neopentalenolactone antibiotic. This chain is Pentalenene oxygenase (ptlI), found in Streptomyces avermitilis (strain ATCC 31267 / DSM 46492 / JCM 5070 / NBRC 14893 / NCIMB 12804 / NRRL 8165 / MA-4680).